The chain runs to 616 residues: 2-[(L-alanin-3-ylcarbamoyl)methyl]-3-(2-aminoethylcarbamoyl)-2-hydroxypropanoate synthase (616 aa).

Belongs to the IucA/IucC family. Forms a mixture of monomer and dimer in solution.

It carries out the reaction 2-[(2-aminoethylcarbamoyl)methyl]-2-hydroxybutanedioate + (S)-2,3-diaminopropanoate + ATP = 2-[(L-alanin-3-ylcarbamoyl)methyl]-3-(2-aminoethylcarbamoyl)-2-hydroxypropanoate + AMP + diphosphate. It participates in siderophore biosynthesis. Functionally, catalyzes the condensation of L-2,3-diaminopropionic acid (L-Dap) and citryl-diaminoethane to form L-2,3-diaminopropionyl-citryl-diaminoethane, the third step in staphyloferrin B biosynthesis. This Staphylococcus aureus (strain NCTC 8325 / PS 47) protein is 2-[(L-alanin-3-ylcarbamoyl)methyl]-3-(2-aminoethylcarbamoyl)-2-hydroxypropanoate synthase.